The following is a 278-amino-acid chain: Large ribosomal subunit protein uL2 (278 aa).

Disordered stretches follow at residues 32–54 (SLCRPLKKSGGRNNNGRITTRHI) and 221–278 (RGMT…RNAK). Gly residues predominate over residues 232–245 (NGGGEGKSKSGGGR).

It belongs to the universal ribosomal protein uL2 family. Part of the 50S ribosomal subunit. Forms a bridge to the 30S subunit in the 70S ribosome.

In terms of biological role, one of the primary rRNA binding proteins. Required for association of the 30S and 50S subunits to form the 70S ribosome, for tRNA binding and peptide bond formation. It has been suggested to have peptidyltransferase activity; this is somewhat controversial. Makes several contacts with the 16S rRNA in the 70S ribosome. This Akkermansia muciniphila (strain ATCC BAA-835 / DSM 22959 / JCM 33894 / BCRC 81048 / CCUG 64013 / CIP 107961 / Muc) protein is Large ribosomal subunit protein uL2.